The sequence spans 258 residues: Phosphate import ATP-binding protein PstB (258 aa).

Residues 5–247 (IDVSGLTAYY…ERIFSNPSVQ (243 aa)) form the ABC transporter domain. 37 to 44 (GPSGCGKS) provides a ligand contact to ATP.

Belongs to the ABC transporter superfamily. Phosphate importer (TC 3.A.1.7) family. As to quaternary structure, the complex is composed of two ATP-binding proteins (PstB), two transmembrane proteins (PstC and PstA) and a solute-binding protein (PstS).

The protein resides in the cell membrane. It catalyses the reaction phosphate(out) + ATP + H2O = ADP + 2 phosphate(in) + H(+). Its function is as follows. Part of the ABC transporter complex PstSACB involved in phosphate import. Responsible for energy coupling to the transport system. In Streptomyces avermitilis (strain ATCC 31267 / DSM 46492 / JCM 5070 / NBRC 14893 / NCIMB 12804 / NRRL 8165 / MA-4680), this protein is Phosphate import ATP-binding protein PstB.